The chain runs to 322 residues: Secreted effector protein SseI (322 aa).

As to quaternary structure, interacts with host IQGAP1 and host TRIP6 (thyroid receptor-interacting protein 6).

The protein resides in the secreted. Its subcellular location is the host cytoplasm. Its function is as follows. Effector proteins function to alter host cell physiology and promote bacterial survival in host tissues. This protein is required to maintain a long-term chronic systemic infection in mice. It inhibits normal cell migration of primary macrophages and dendritic cells, by a mechanism that involves interaction with the host factor IQGAP1, an important regulator of the cytoskeleton and cell migration. Also accelerates the systemic spread of infection from the gastrointestinal tract to the bloodstream, probably by interacting with host TRIP6. The protein is Secreted effector protein SseI (sseI) of Salmonella typhimurium (strain LT2 / SGSC1412 / ATCC 700720).